The primary structure comprises 443 residues: Xaa-Pro dipeptidase (443 aa).

Mn(2+)-binding residues include Asp-244, Asp-255, His-336, Glu-381, and Glu-420.

It belongs to the peptidase M24B family. Bacterial-type prolidase subfamily. Mn(2+) is required as a cofactor.

The enzyme catalyses Xaa-L-Pro dipeptide + H2O = an L-alpha-amino acid + L-proline. Functionally, splits dipeptides with a prolyl residue in the C-terminal position. The protein is Xaa-Pro dipeptidase of Stenotrophomonas maltophilia (strain K279a).